A 158-amino-acid chain; its full sequence is Small ribosomal subunit protein uS15 (158 aa).

Residues 1 to 18 (MARMHARKRGKSGSKRPP) are compositionally biased toward basic residues. Residues 1 to 21 (MARMHARKRGKSGSKRPPRTA) are disordered.

This sequence belongs to the universal ribosomal protein uS15 family. Part of the 30S ribosomal subunit.

This is Small ribosomal subunit protein uS15 from Pyrococcus horikoshii (strain ATCC 700860 / DSM 12428 / JCM 9974 / NBRC 100139 / OT-3).